The following is a 171-amino-acid chain: 3-hydroxydecanoyl-[acyl-carrier-protein] dehydratase (171 aa).

His-70 is a catalytic residue.

Belongs to the thioester dehydratase family. FabA subfamily. In terms of assembly, homodimer.

Its subcellular location is the cytoplasm. It carries out the reaction a (3R)-hydroxyacyl-[ACP] = a (2E)-enoyl-[ACP] + H2O. The enzyme catalyses (3R)-hydroxydecanoyl-[ACP] = (2E)-decenoyl-[ACP] + H2O. The catalysed reaction is (2E)-decenoyl-[ACP] = (3Z)-decenoyl-[ACP]. The protein operates within lipid metabolism; fatty acid biosynthesis. Functionally, necessary for the introduction of cis unsaturation into fatty acids. Catalyzes the dehydration of (3R)-3-hydroxydecanoyl-ACP to E-(2)-decenoyl-ACP and then its isomerization to Z-(3)-decenoyl-ACP. Can catalyze the dehydratase reaction for beta-hydroxyacyl-ACPs with saturated chain lengths up to 16:0, being most active on intermediate chain length. This is 3-hydroxydecanoyl-[acyl-carrier-protein] dehydratase from Photobacterium profundum (strain SS9).